The chain runs to 412 residues: Probable cystathionine gamma-synthase 2 (412 aa).

Pyridoxal 5'-phosphate contacts are provided by Y76, R78, G106, M107, Y131, S226, and T228. K229 carries the post-translational modification N6-(pyridoxal phosphate)lysine.

The protein belongs to the trans-sulfuration enzymes family. Pyridoxal 5'-phosphate is required as a cofactor.

The enzyme catalyses O-phospho-L-homoserine + L-cysteine = L,L-cystathionine + phosphate. It carries out the reaction O-succinyl-L-homoserine + L-cysteine = L,L-cystathionine + succinate + H(+). It functions in the pathway amino-acid biosynthesis; L-methionine biosynthesis via de novo pathway; L-cystathionine from O-succinyl-L-homoserine: step 1/1. Functionally, catalyzes the first committed step of methionine (Met) biosynthesis. Catalyzes the formation of L-cystathionine from homoserine esters and L-cysteine, via a gamma-replacement reaction. This is Probable cystathionine gamma-synthase 2 from Arabidopsis thaliana (Mouse-ear cress).